Consider the following 547-residue polypeptide: MAAKEIVFDQKARDAILKGVNTLADAVKVTLGPKGRNVVIEKSFGSPTITKDGVTVAKEIELENKFENMGAQMVKEVASKTSDVAGDGTTTATVLAQAIYREGSKLVAAGHNPMDVKRGIDKAVEAIVGELKKLSKPTKDHKEIAQVGIISANGDTTIGNIIAEAMEKVGKEGVITVEEAKGLETTLDVVEGMQFDRGYLSPYFVTDAERMEAVLEDAYILINEKKISNMKDLLPLLEQIARSGKPLIIVAEEVEGEALATLVVNKLRGTLHVCAVKAPGFGDRRKAMLEDIAILTGGRMIAEELGLKLEQVTLKDLGRAKRVTVDKDNTTIVDGAGKKEDIEARVKTIRAQIEETTSDYDREKLQERLAKLVGGVAVINVGAATETEMKEKKARVEDALHATRAAVEEGIVPGGGVAYLRCVKALEGVKVNEGEKVGLDIVRRAIEEPLRQISGNGGYEGSIVVNKVKEAKEAAFGFNAATGEYEDLVKAGVIDPTKVSRSALQNAASVASLMLTTMAMVAEKPKEESAAPAGGGMGGMGGMGGMM.

ATP contacts are provided by residues 30-33, lysine 51, 87-91, glycine 415, 479-481, and aspartate 495; these read TLGP, DGTTT, and NAA. The disordered stretch occupies residues 525 to 547; that stretch reads PKEESAAPAGGGMGGMGGMGGMM. The span at 533 to 547 shows a compositional bias: gly residues; that stretch reads AGGGMGGMGGMGGMM.

It belongs to the chaperonin (HSP60) family. As to quaternary structure, forms a cylinder of 14 subunits composed of two heptameric rings stacked back-to-back. Interacts with the co-chaperonin GroES.

The protein resides in the cytoplasm. The enzyme catalyses ATP + H2O + a folded polypeptide = ADP + phosphate + an unfolded polypeptide.. Its function is as follows. Together with its co-chaperonin GroES, plays an essential role in assisting protein folding. The GroEL-GroES system forms a nano-cage that allows encapsulation of the non-native substrate proteins and provides a physical environment optimized to promote and accelerate protein folding. This chain is Chaperonin GroEL 2, found in Anaeromyxobacter dehalogenans (strain 2CP-C).